We begin with the raw amino-acid sequence, 137 residues long: Nucleoside diphosphate kinase (137 aa).

Residues Lys-9, Phe-57, Arg-85, Thr-91, Arg-102, and Asn-112 each contribute to the ATP site. The active-site Pros-phosphohistidine intermediate is His-115.

Belongs to the NDK family. Homotetramer. Requires Mg(2+) as cofactor.

Its subcellular location is the cytoplasm. It carries out the reaction a 2'-deoxyribonucleoside 5'-diphosphate + ATP = a 2'-deoxyribonucleoside 5'-triphosphate + ADP. It catalyses the reaction a ribonucleoside 5'-diphosphate + ATP = a ribonucleoside 5'-triphosphate + ADP. Functionally, major role in the synthesis of nucleoside triphosphates other than ATP. The ATP gamma phosphate is transferred to the NDP beta phosphate via a ping-pong mechanism, using a phosphorylated active-site intermediate. The chain is Nucleoside diphosphate kinase from Wolinella succinogenes (strain ATCC 29543 / DSM 1740 / CCUG 13145 / JCM 31913 / LMG 7466 / NCTC 11488 / FDC 602W) (Vibrio succinogenes).